The sequence spans 196 residues: Ribosome maturation factor RimP (196 aa).

Positions 164 to 196 (LAPQKPNKPGPKKPGHEKKKPSNESAAGKPRAE) are disordered. Residues 173–182 (GPKKPGHEKK) show a composition bias toward basic residues.

Belongs to the RimP family.

The protein localises to the cytoplasm. Its function is as follows. Required for maturation of 30S ribosomal subunits. The chain is Ribosome maturation factor RimP from Xanthomonas euvesicatoria pv. vesicatoria (strain 85-10) (Xanthomonas campestris pv. vesicatoria).